Consider the following 147-residue polypeptide: Lysozyme C (147 aa).

The signal sequence occupies residues 1-18; sequence MRSLLILVLCFLPLAALG. Residues 19–147 enclose the C-type lysozyme domain; sequence KVYGRCELAA…VHAWIRGCRL (129 aa). Intrachain disulfides connect C24–C145, C48–C133, C82–C98, and C94–C112.

Belongs to the glycosyl hydrolase 22 family. As to quaternary structure, monomer.

It is found in the secreted. It catalyses the reaction Hydrolysis of (1-&gt;4)-beta-linkages between N-acetylmuramic acid and N-acetyl-D-glucosamine residues in a peptidoglycan and between N-acetyl-D-glucosamine residues in chitodextrins.. Lysozymes have primarily a bacteriolytic function; those in tissues and body fluids are associated with the monocyte-macrophage system and enhance the activity of immunoagents. The protein is Lysozyme C (LYZ) of Meleagris gallopavo (Wild turkey).